Here is a 219-residue protein sequence, read N- to C-terminus: Octanoyltransferase (219 aa).

The BPL/LPL catalytic domain occupies 32-207 (ASSPDQLWIV…TFSHNLGYQN (176 aa)). Substrate contacts are provided by residues 71–78 (RGGQVTYH), 138–140 (SLG), and 151–153 (GLA). The Acyl-thioester intermediate role is filled by cysteine 169.

It belongs to the LipB family.

The protein resides in the cytoplasm. It catalyses the reaction octanoyl-[ACP] + L-lysyl-[protein] = N(6)-octanoyl-L-lysyl-[protein] + holo-[ACP] + H(+). Its pathway is protein modification; protein lipoylation via endogenous pathway; protein N(6)-(lipoyl)lysine from octanoyl-[acyl-carrier-protein]: step 1/2. In terms of biological role, catalyzes the transfer of endogenously produced octanoic acid from octanoyl-acyl-carrier-protein onto the lipoyl domains of lipoate-dependent enzymes. Lipoyl-ACP can also act as a substrate although octanoyl-ACP is likely to be the physiological substrate. The protein is Octanoyltransferase of Shewanella sediminis (strain HAW-EB3).